Consider the following 386-residue polypeptide: O-phospho-L-seryl-tRNA:Cys-tRNA synthase (386 aa).

Pyridoxal 5'-phosphate is bound by residues 89-90 (AR), asparagine 196, and 219-221 (SGH). An N6-(pyridoxal phosphate)lysine modification is found at lysine 222.

This sequence belongs to the SepCysS family. In terms of assembly, homodimer. Interacts with SepRS. Pyridoxal 5'-phosphate is required as a cofactor.

It carries out the reaction O-phospho-L-seryl-tRNA(Cys) + hydrogen sulfide + H(+) = L-cysteinyl-tRNA(Cys) + phosphate. Functionally, converts O-phospho-L-seryl-tRNA(Cys) (Sep-tRNA(Cys)) to L-cysteinyl-tRNA(Cys) (Cys-tRNA(Cys)). This chain is O-phospho-L-seryl-tRNA:Cys-tRNA synthase, found in Methanosarcina mazei (strain ATCC BAA-159 / DSM 3647 / Goe1 / Go1 / JCM 11833 / OCM 88) (Methanosarcina frisia).